The following is a 951-amino-acid chain: Pheromone-regulated membrane protein 10 (951 aa).

Composition is skewed to polar residues over residues 1–10 (MSSSYGNNGD), 68–84 (GGSTDELNRANRTNVGS), and 92–104 (RTASNTESGNRRQ). Disordered stretches follow at residues 1–293 (MSSS…EDPI), 313–366 (AGKS…TMVS), and 433–487 (NDSS…LPNF). Residues 126–135 (DDDDEEEEEH) show a composition bias toward acidic residues. Residues 219 to 234 (PHQETNDGRNSAESHS) show a composition bias toward basic and acidic residues. Composition is skewed to polar residues over residues 318 to 332 (PGTQHGASGSASSEH), 354 to 366 (PFNQSTDGETMVS), and 468 to 484 (SQTNVSGANKSGSSMNL). The next 10 membrane-spanning stretches (helical) occupy residues 635 to 655 (WVSVLLYAFCSSMVTPFAFGG), 657 to 677 (WINMAVAFGIGLCVGSLQFIV), 687 to 707 (VFEVTASIVVSFCGRALGSIP), 711 to 731 (ICFGATVQGSLALILPGYIIL), 753 to 773 (IIYSLFLGFGITLGAALFGWI), 786 to 806 (NISPWFRFIFVPCFSIGLGLI), 811 to 831 (WTQLPVMTLISCCGYVVTYFS), 841 to 861 (FTSAMAAFVIGILGNLYSRIW), 863 to 883 (GFAVSAMLPAIFVQVPSGVAS), and 918 to 938 (VTMIQVSIGISVGLFASTLFI).

This sequence belongs to the ThrE exporter (TC 2.A.79) family.

The protein resides in the membrane. The sequence is that of Pheromone-regulated membrane protein 10 from Kluyveromyces lactis (strain ATCC 8585 / CBS 2359 / DSM 70799 / NBRC 1267 / NRRL Y-1140 / WM37) (Yeast).